The primary structure comprises 185 residues: Calcium-binding protein K-like (185 aa).

EF-hand domains lie at 60–95 (WDEA…MTRA) and 96–131 (PTTD…VVVC). Asp73, Asp75, Asn77, Glu84, Asp109, Asp111, Ser113, Tyr115, and Glu120 together coordinate Ca(2+).

This sequence belongs to the recoverin family.

This chain is Calcium-binding protein K-like, found in Dictyostelium discoideum (Social amoeba).